Reading from the N-terminus, the 361-residue chain is tRNA-specific 2-thiouridylase MnmA (361 aa).

ATP is bound by residues leucine 6–serine 13 and isoleucine 32. The interval asparagine 93–aspartate 95 is interaction with target base in tRNA. Residue cysteine 98 is the Nucleophile of the active site. The cysteines at positions 98 and 193 are disulfide-linked. Glycine 121 is an ATP binding site. Positions lysine 143–glutamine 145 are interaction with tRNA. Residue cysteine 193 is the Cysteine persulfide intermediate of the active site.

It belongs to the MnmA/TRMU family.

It is found in the cytoplasm. The enzyme catalyses S-sulfanyl-L-cysteinyl-[protein] + uridine(34) in tRNA + AH2 + ATP = 2-thiouridine(34) in tRNA + L-cysteinyl-[protein] + A + AMP + diphosphate + H(+). Catalyzes the 2-thiolation of uridine at the wobble position (U34) of tRNA, leading to the formation of s(2)U34. The sequence is that of tRNA-specific 2-thiouridylase MnmA from Porphyromonas gingivalis (strain ATCC 33277 / DSM 20709 / CIP 103683 / JCM 12257 / NCTC 11834 / 2561).